A 245-amino-acid chain; its full sequence is Brasilane terpene glycosides biosynthesis cluster protein D (245 aa).

2 consecutive C3H1-type zinc fingers follow at residues 121 to 152 and 161 to 185; these read KELK…HDNV and ICHF…HYPA. The disordered stretch occupies residues 186 to 245; sequence PHRVTAPMPSKKKSKKLRSSVADDASHPDLGKARRHDPRDDEQNDEVWRNQGRARPGQEW. Over residues 209–226 the composition is skewed to basic and acidic residues; the sequence is DASHPDLGKARRHDPRDD.

In terms of biological role, part of the gene cluster that mediates the biosynthesis of the brasilane terpene glycosides brasilane D and E. The biosynthesis starts with the activity of the terpene cyclase braA that converts farnesyl pyrophosphate into the sesquiterpene alcohol trichobrasilenol. Subsequently, trichobrasilenol is glycosylated by the O-glycosyltransferase braB putatively using UDP-GlcNAc as sugar donor to yield brasilane A. The latter then undergoes two rounds of oxidation performed by the cytochrome P450 monooxygenase braC. In the first round braC hydroxylates C-12 forming brasilane D, which serves as substrate in the second round to establish the epoxide at the bond between C-5 and C-10 and oxidize the alcohol at C-12 to an aldehyde leading to the final product brasilane E. The polypeptide is Brasilane terpene glycosides biosynthesis cluster protein D (Annulohypoxylon truncatum (Hypoxylon truncatum)).